The sequence spans 244 residues: Gas vesicle protein F (244 aa).

Belongs to the gas vesicle GvpF/GvpL family. In terms of assembly, binds GvpA.

It is found in the gas vesicle. In terms of biological role, a minor component of the gas vesicle, may be involved in preventing GvpA aggregation during gas vesicle nucleation. Gas vesicles (GV) are hollow, gas filled proteinaceous nanostructures. During planktonic growth they allow positioning of the organism at a favorable depth for light or nutrient acquisition. Cluster expression in E.coli (gvpA1-gvpA2-gvpC-gvpN-gvpJ-gvpK-gvpF-gvpG-gvpV-gvpW) allows cells to float and produces irregularly shaped gas vesicles. In Nostoc sp. (strain PCC 7120 / SAG 25.82 / UTEX 2576), this protein is Gas vesicle protein F.